Reading from the N-terminus, the 365-residue chain is Eukaryotic translation initiation factor 3 subunit H (365 aa).

Residues 11–160 (VKVEALVVMK…LRAFRLSPKF (150 aa)) enclose the MPN domain.

Belongs to the eIF-3 subunit H family. As to quaternary structure, component of the eukaryotic translation initiation factor 3 (eIF-3) complex.

It is found in the cytoplasm. In terms of biological role, component of the eukaryotic translation initiation factor 3 (eIF-3) complex, which is involved in protein synthesis of a specialized repertoire of mRNAs and, together with other initiation factors, stimulates binding of mRNA and methionyl-tRNAi to the 40S ribosome. The eIF-3 complex specifically targets and initiates translation of a subset of mRNAs involved in cell proliferation. This Aspergillus terreus (strain NIH 2624 / FGSC A1156) protein is Eukaryotic translation initiation factor 3 subunit H.